The sequence spans 286 residues: Master replication protein (286 aa).

The region spanning 2-96 (ARQVICWCFT…LEGPWEYGEF (95 aa)) is the CRESS-DNA virus Rep endonuclease domain. Residues 9-12 (CFTL) carry the RCR-1 motif. A divalent metal cation-binding residues include Glu33 and His41. The RCR-2 motif lies at 41–43 (HFQ). Residues 50–70 (KRTSLAGMKKLIPGAHFEKRR) carry the Nuclear localization signal motif. Residue Tyr79 is the For DNA cleavage activity of the active site. The short motif at 79–82 (YAMK) is the RCR-3 element. Asp84 lines the a divalent metal cation pocket. Residues 96-102 (FIPTIED) carry the Nuclear localization signal motif. 180–188 (GPQGGEGKT) serves as a coordination point for ATP.

The protein belongs to the nanoviridea/circoviridae replication-associated protein family. Homooligomer (Potential). Rep binds to repeated DNA motifs (iterons). Mg(2+) is required as a cofactor. The cofactor is Mn(2+).

The protein localises to the host nucleus. The catalysed reaction is ATP + H2O = ADP + phosphate + H(+). In terms of biological role, essential for the replication of all genomic viral ssDNA (trans-replication). The closed circular ssDNA genome is first converted to a superhelical dsDNA. Rep binds a specific hairpin at the genome origin of replication. Introduces an endonucleolytic nick within the conserved sequence 5'-A[GT]TATTAC-3' in the intergenic region of the genome, thereby initiating the rolling circle replication (RCR). Following cleavage, binds covalently to the 5'-phosphate of DNA as a tyrosyl ester. The cleavage gives rise to a free 3'-OH that serves as a primer for the cellular DNA polymerase. The polymerase synthesizes the (+) strand DNA by rolling circle mechanism. After one round of replication, a Rep-catalyzed nucleotidyl transfer reaction releases a circular single-stranded virus genome, thereby terminating the replication. Displays origin-specific DNA cleavage, nucleotidyl transferase, ATPase and helicase activities. The chain is Master replication protein (DNA-R) from Astragalus sinicus (Chinese milk vetch).